The chain runs to 407 residues: uncharacterized protein (407 aa).

11 helical membrane passes run 13 to 30, 40 to 62, 67 to 89, 118 to 140, 147 to 169, 179 to 199, 253 to 271, 281 to 303, 334 to 356, 361 to 378, and 385 to 402; these read IVFTSFILYLLFFLSPFL, VTPLASIIGSGYLVSAPLLYYVL, ILGMAGIVILAYLIGGAIRYNII, LAFAYMISIAFYLRLLSSFVFSG, VYERLLTTGLLLFIGISGFIRRL, AVGLKLSIIFSFLTALLYYNY, WISGFIYVSFMFLITSVFV, TEIIFLASAVSLVLGYLLRFGPL, GYLITTLVGVALVWSANVFEIIA, AFAFYYLLQTIIAWLVSF, and QFLVFTLLIPVLIFIVLF.

The protein resides in the cell membrane. This is an uncharacterized protein from Aquifex aeolicus (strain VF5).